We begin with the raw amino-acid sequence, 469 residues long: Glutamate--tRNA ligase (469 aa).

Residues 9-19 carry the 'HIGH' region motif; it reads PSPTGMFHVGG. Zn(2+) is bound by residues Cys-100, Cys-102, Cys-122, and Asp-124. The 'KMSKS' region signature appears at 232–236; that stretch reads KLSKR. Lys-235 contacts ATP.

The protein belongs to the class-I aminoacyl-tRNA synthetase family. Glutamate--tRNA ligase type 1 subfamily. Monomer. Zn(2+) is required as a cofactor.

It is found in the cytoplasm. It catalyses the reaction tRNA(Glu) + L-glutamate + ATP = L-glutamyl-tRNA(Glu) + AMP + diphosphate. In terms of biological role, catalyzes the attachment of glutamate to tRNA(Glu) in a two-step reaction: glutamate is first activated by ATP to form Glu-AMP and then transferred to the acceptor end of tRNA(Glu). The chain is Glutamate--tRNA ligase from Salinispora arenicola (strain CNS-205).